Consider the following 1148-residue polypeptide: Envelopment polyprotein (1148 aa).

The first 23 residues, Met-1–Ala-23, serve as a signal peptide directing secretion. Residues Ala-24–Leu-496 are Lumenal-facing. Cystine bridges form between Cys-34-Cys-159, Cys-68-Cys-165, Cys-117-Cys-136, Cys-141-Cys-146, Cys-183-Cys-193, and Cys-218-Cys-257. Residue Asn-142 is glycosylated (N-linked (GlcNAc...) asparagine; by host). The N-linked (GlcNAc...) asparagine; by host glycan is linked to Asn-357. 4 disulfide bridges follow: Cys-386-Cys-445, Cys-390-Cys-399, Cys-415-Cys-434, and Cys-462-Cys-485. A glycan (N-linked (GlcNAc...) asparagine; by host) is linked at Asn-409. Residues Leu-497 to Lys-517 form a helical membrane-spanning segment. At Ile-518–Phe-637 the chain is on the cytoplasmic side. The segment at Cys-526 to Lys-543 is binding to the ribonucleoprotein. 2 consecutive CCHC-type zinc fingers follow at residues Cys-555–Cys-575 and Cys-580–Cys-601. 3 binding to the ribonucleoprotein regions span residues Phe-598–Leu-615, Lys-602–Lys-613, and Met-621–Ser-635. In terms of domain architecture, ITAM spans Met-621–Cys-644. A YxxL motif is present at residues Tyr-625–Leu-628. Residues Phe-638–Ala-658 form a helical membrane-spanning segment. Residues Glu-659–Trp-1115 lie on the Lumenal side of the membrane. 8 disulfide bridges follow: Cys-745-Cys-780, Cys-749-Cys-787, Cys-761-Cys-894, Cys-775-Cys-905, Cys-790-Cys-913, Cys-816-Cys-825, Cys-833-Cys-842, and Cys-873-Cys-877. The tract at residues Tyr-767–Cys-787 is fusion loop. N-linked (GlcNAc...) asparagine; by host glycosylation is present at Asn-937. 5 disulfide bridges follow: Cys-979–Cys-1009, Cys-1002–Cys-1054, Cys-1019–Cys-1024, Cys-1055–Cys-1060, and Cys-1094–Cys-1098. The helical transmembrane segment at Met-1116 to Cys-1136 threads the bilayer. Binding to the ribonucleoprotein stretches follow at residues Leu-1131–Arg-1143 and Leu-1131–Pro-1148. Over Pro-1137–Pro-1148 the chain is Cytoplasmic.

Belongs to the hantavirus envelope glycoprotein family. As to quaternary structure, homodimer. Homotetramer; forms heterotetrameric Gn-Gc spikes in the pre-fusion conformation. Interacts (via C-terminus) with the nucleoprotein. Interacts with host TUFM; this interaction contributes to the virus-induced degradation of mitochondria by autophagy, which leads to degradation of host MAVS and inhibition of type I interferon (IFN) responses. Interacts with host MAP1LC3B; this interaction contributes to the virus-induced degradation of mitochondria by autophagy, which leads to degradation of host MAVS and inhibition of type I interferon (IFN) responses. Homodimer. Homotetramer; forms heterotetrameric Gn-Gc spikes in the pre-fusion conformation. Homotrimer; forms homotrimer in the post-fusion conformation at acidic pH. Interacts (via C-terminus) with the nucleoprotein. Post-translationally, envelope polyprotein precursor is quickly cleaved in vivo just after synthesis, presumably by host signal peptidase.

It localises to the virion membrane. Its subcellular location is the host cell surface. The protein resides in the host Golgi apparatus membrane. It is found in the host endoplasmic reticulum membrane. The protein localises to the host mitochondrion. Forms homotetramers with glycoprotein C at the surface of the virion. Attaches the virion to host cell receptors including integrin ITGAV/ITGB3. This attachment induces virion internalization predominantly through clathrin-dependent endocytosis. Mediates the assembly and budding of infectious virus particles through its interaction with the nucleocapsid protein and the viral genome. May dysregulate normal immune and endothelial cell responses through an ITAM motif. Translocates to mitochondria, binds to host TUFM and recruits MAP1LC3B. These interactions induce mitochondrial autophagy and therefore destruction of host MAVS leading to inhibition of type I interferon (IFN) responses. Concomitant breakdown of glycoprotein N is apparently prevented by the nucleoprotein that may inhibit Gn-stimulated autophagosome-lysosome fusion. Interacts with the viral genomic RNA. In terms of biological role, forms homotetramers with glycoprotein N at the surface of the virion. Attaches the virion to host cell receptors including integrin ITGAV/ITGB3. This attachment induces virion internalization predominantly through clathrin-dependent endocytosis. Class II fusion protein that promotes fusion of viral membrane with host endosomal membrane after endocytosis of the virion. In Homo sapiens (Human), this protein is Envelopment polyprotein (GP).